The chain runs to 200 residues: Recombination protein RecR (200 aa).

The C4-type zinc-finger motif lies at 57–72 (CNECRTFTEEDVCHIC). The 96-residue stretch at 81–176 (GLLCVVESPA…DASRIAHGVP (96 aa)) folds into the Toprim domain.

This sequence belongs to the RecR family.

Its function is as follows. May play a role in DNA repair. It seems to be involved in an RecBC-independent recombinational process of DNA repair. It may act with RecF and RecO. The protein is Recombination protein RecR of Vibrio vulnificus (strain CMCP6).